A 190-amino-acid chain; its full sequence is Putative 3-methyladenine DNA glycosylase (190 aa).

It belongs to the DNA glycosylase MPG family.

This is Putative 3-methyladenine DNA glycosylase from Chlamydia abortus (strain DSM 27085 / S26/3) (Chlamydophila abortus).